Here is a 270-residue protein sequence, read N- to C-terminus: Bis(5'-nucleosyl)-tetraphosphatase, symmetrical (270 aa).

This sequence belongs to the Ap4A hydrolase family.

It catalyses the reaction P(1),P(4)-bis(5'-adenosyl) tetraphosphate + H2O = 2 ADP + 2 H(+). Functionally, hydrolyzes diadenosine 5',5'''-P1,P4-tetraphosphate to yield ADP. This chain is Bis(5'-nucleosyl)-tetraphosphatase, symmetrical, found in Haemophilus ducreyi (strain 35000HP / ATCC 700724).